The primary structure comprises 389 residues: Lipid-A-disaccharide synthase (389 aa).

It belongs to the LpxB family.

It catalyses the reaction a lipid X + a UDP-2-N,3-O-bis[(3R)-3-hydroxyacyl]-alpha-D-glucosamine = a lipid A disaccharide + UDP + H(+). It functions in the pathway bacterial outer membrane biogenesis; LPS lipid A biosynthesis. Condensation of UDP-2,3-diacylglucosamine and 2,3-diacylglucosamine-1-phosphate to form lipid A disaccharide, a precursor of lipid A, a phosphorylated glycolipid that anchors the lipopolysaccharide to the outer membrane of the cell. This chain is Lipid-A-disaccharide synthase, found in Burkholderia cenocepacia (strain HI2424).